We begin with the raw amino-acid sequence, 945 residues long: Isoleucine--tRNA ligase (945 aa).

Residues 66 to 76 carry the 'HIGH' region motif; the sequence is PYANGDIHLGH. Residue E581 coordinates L-isoleucyl-5'-AMP. The short motif at 622-626 is the 'KMSKS' region element; the sequence is KMSKS. K625 contributes to the ATP binding site. Residues C908, C911, C928, and C931 each contribute to the Zn(2+) site.

Belongs to the class-I aminoacyl-tRNA synthetase family. IleS type 1 subfamily. As to quaternary structure, monomer. Zn(2+) is required as a cofactor.

It localises to the cytoplasm. The catalysed reaction is tRNA(Ile) + L-isoleucine + ATP = L-isoleucyl-tRNA(Ile) + AMP + diphosphate. Its function is as follows. Catalyzes the attachment of isoleucine to tRNA(Ile). As IleRS can inadvertently accommodate and process structurally similar amino acids such as valine, to avoid such errors it has two additional distinct tRNA(Ile)-dependent editing activities. One activity is designated as 'pretransfer' editing and involves the hydrolysis of activated Val-AMP. The other activity is designated 'posttransfer' editing and involves deacylation of mischarged Val-tRNA(Ile). The polypeptide is Isoleucine--tRNA ligase (Burkholderia ambifaria (strain ATCC BAA-244 / DSM 16087 / CCUG 44356 / LMG 19182 / AMMD) (Burkholderia cepacia (strain AMMD))).